The chain runs to 120 residues: uncharacterized protein (120 aa).

3 helical membrane passes run 20 to 39, 52 to 71, and 86 to 108; these read FFWP…CYLL, GSSL…LFSI, and ILVV…SIIG.

It localises to the cell membrane. This is an uncharacterized protein from Pasteurella multocida (strain Pm70).